The sequence spans 460 residues: Probable amino acid transporter skat-1 (460 aa).

10 helical membrane passes run 64-84 (LGGL…NWYG), 132-152 (FVNV…ILFI), 172-192 (MILM…FTEM), 194-214 (IVSF…AVIM), 236-256 (TITM…ILPI), 270-290 (FGVL…LGFF), 316-336 (VNVF…YVVY), 362-382 (GFRV…PKLE), 383-403 (IMIP…FPPF), and 426-446 (IFIN…GVYT).

Belongs to the amino acid/polyamine transporter 2 family. As to expression, expressed in the head, tail, body and ventral nerve cord neurons, muscles of the vulva, and intestine.

It is found in the membrane. The protein localises to the cytoplasmic granule. Its function is as follows. Plays a role in the accumulation of vital dyes and endogenous fluorescent compounds in lysosome related organelles. Has an effect on lysosome related organelle (LRO) function, in a pathway with serotonin. This Caenorhabditis elegans protein is Probable amino acid transporter skat-1.